The sequence spans 679 residues: Methionine--tRNA ligase (679 aa).

Zn(2+)-binding residues include C147, C150, C160, and C163. The short motif at 332–336 (KISTS) is the 'KMSKS' region element. An ATP-binding site is contributed by T335. One can recognise a tRNA-binding domain in the interval 578 to 679 (DFMKLDIRVG…REVKPGSEVK (102 aa)).

The protein belongs to the class-I aminoacyl-tRNA synthetase family. MetG type 1 subfamily. As to quaternary structure, homodimer. Zn(2+) is required as a cofactor.

It localises to the cytoplasm. It carries out the reaction tRNA(Met) + L-methionine + ATP = L-methionyl-tRNA(Met) + AMP + diphosphate. Is required not only for elongation of protein synthesis but also for the initiation of all mRNA translation through initiator tRNA(fMet) aminoacylation. The protein is Methionine--tRNA ligase of Bacteroides fragilis (strain YCH46).